The following is a 170-amino-acid chain: Aspartate 1-decarboxylase (170 aa).

Ser25 (schiff-base intermediate with substrate; via pyruvic acid) is an active-site residue. At Ser25 the chain carries Pyruvic acid (Ser). Thr57 contacts substrate. Tyr58 acts as the Proton donor in catalysis. A substrate-binding site is contributed by 73-75 (GAA). Positions 118–170 (GHDPAEALPDDPSSLRGDLAVPGNPVTAAARRGTPTHQAPVALPASRTVVAPR) are disordered.

This sequence belongs to the PanD family. Heterooctamer of four alpha and four beta subunits. Pyruvate is required as a cofactor. Is synthesized initially as an inactive proenzyme, which is activated by self-cleavage at a specific serine bond to produce a beta-subunit with a hydroxyl group at its C-terminus and an alpha-subunit with a pyruvoyl group at its N-terminus.

It is found in the cytoplasm. The catalysed reaction is L-aspartate + H(+) = beta-alanine + CO2. The protein operates within cofactor biosynthesis; (R)-pantothenate biosynthesis; beta-alanine from L-aspartate: step 1/1. Functionally, catalyzes the pyruvoyl-dependent decarboxylation of aspartate to produce beta-alanine. The sequence is that of Aspartate 1-decarboxylase from Frankia alni (strain DSM 45986 / CECT 9034 / ACN14a).